Here is an 817-residue protein sequence, read N- to C-terminus: Putative receptor protein kinase ZmPK1 (817 aa).

Positions methionine 1 to serine 28 are cleaved as a signal peptide. Residues arginine 29 to aspartate 158 enclose the Bulb-type lectin domain. At arginine 29–tryptophan 472 the chain is on the extracellular side. Residues asparagine 83, asparagine 128, asparagine 228, and asparagine 279 are each glycosylated (N-linked (GlcNAc...) asparagine). The 37-residue stretch at methionine 292 to glycine 328 folds into the EGF-like domain. 2 disulfide bridges follow: cysteine 296-cysteine 308 and cysteine 302-cysteine 316. Residues asparagine 329 and asparagine 339 are each glycosylated (N-linked (GlcNAc...) asparagine). In terms of domain architecture, PAN spans cysteine 342 to threonine 424. 2 cysteine pairs are disulfide-bonded: cysteine 376/cysteine 398 and cysteine 384/cysteine 386. Asparagine 452 carries an N-linked (GlcNAc...) asparagine glycan. The chain crosses the membrane as a helical span at residues phenylalanine 473–leucine 498. Over lysine 499–aspartate 817 the chain is Cytoplasmic. The Protein kinase domain maps to arginine 534–aspartate 817. Residues leucine 540–valine 548 and lysine 562 contribute to the ATP site. The active-site Proton acceptor is the aspartate 658.

This sequence belongs to the protein kinase superfamily. Ser/Thr protein kinase family. Expressed predominantly in the shoots and roots of young maize seedlings, and to a lesser extent in the silks.

Its subcellular location is the membrane. It catalyses the reaction L-seryl-[protein] + ATP = O-phospho-L-seryl-[protein] + ADP + H(+). The catalysed reaction is L-threonyl-[protein] + ATP = O-phospho-L-threonyl-[protein] + ADP + H(+). Functionally, probable receptor. Interaction with a ligand in the extracellular domain triggers the protein kinase activity of the cytoplasmic domain. The sequence is that of Putative receptor protein kinase ZmPK1 (PK1) from Zea mays (Maize).